A 351-amino-acid polypeptide reads, in one-letter code: Carbamoyl phosphate synthase small chain (351 aa).

A CPSase region spans residues 1 to 171 (MKGIIYLEDG…IIHIAGNGNK (171 aa)). Ser-45, Gly-219, and Gly-221 together coordinate L-glutamine. In terms of domain architecture, Glutamine amidotransferase type-1 spans 171–351 (KVAVMDFGIK…TYLFDQFVNL (181 aa)). Cys-246 acts as the Nucleophile in catalysis. Residues Leu-247, Gln-250, Asn-288, Gly-290, and Tyr-291 each contribute to the L-glutamine site. Catalysis depends on residues His-331 and Glu-333.

This sequence belongs to the CarA family. Composed of two chains; the small (or glutamine) chain promotes the hydrolysis of glutamine to ammonia, which is used by the large (or ammonia) chain to synthesize carbamoyl phosphate. Tetramer of heterodimers (alpha,beta)4.

It catalyses the reaction hydrogencarbonate + L-glutamine + 2 ATP + H2O = carbamoyl phosphate + L-glutamate + 2 ADP + phosphate + 2 H(+). The catalysed reaction is L-glutamine + H2O = L-glutamate + NH4(+). The protein operates within amino-acid biosynthesis; L-arginine biosynthesis; carbamoyl phosphate from bicarbonate: step 1/1. It participates in pyrimidine metabolism; UMP biosynthesis via de novo pathway; (S)-dihydroorotate from bicarbonate: step 1/3. In terms of biological role, small subunit of the glutamine-dependent carbamoyl phosphate synthetase (CPSase). CPSase catalyzes the formation of carbamoyl phosphate from the ammonia moiety of glutamine, carbonate, and phosphate donated by ATP, constituting the first step of 2 biosynthetic pathways, one leading to arginine and/or urea and the other to pyrimidine nucleotides. The small subunit (glutamine amidotransferase) binds and cleaves glutamine to supply the large subunit with the substrate ammonia. This is Carbamoyl phosphate synthase small chain from Clostridium acetobutylicum (strain ATCC 824 / DSM 792 / JCM 1419 / IAM 19013 / LMG 5710 / NBRC 13948 / NRRL B-527 / VKM B-1787 / 2291 / W).